The chain runs to 216 residues: Probable GTP-binding protein EngB (216 aa).

The EngB-type G domain occupies 37-214; that stretch reads DGLEVAFAGR…RAAMIRLLDE (178 aa). GTP is bound by residues 45-52, 72-76, 92-95, 159-162, and 193-195; these read GRSNVGKS, GRTQE, DMPG, TKAD, and TSS. S52 and T74 together coordinate Mg(2+).

Belongs to the TRAFAC class TrmE-Era-EngA-EngB-Septin-like GTPase superfamily. EngB GTPase family. The cofactor is Mg(2+).

Its function is as follows. Necessary for normal cell division and for the maintenance of normal septation. The protein is Probable GTP-binding protein EngB of Rhodopseudomonas palustris (strain HaA2).